The primary structure comprises 439 residues: GlutamylGlutaminyl-tRNA synthetase (439 aa).

The 'HIGH' region signature appears at 6–16 (PSPTGDMHIGN). The 'KMSKS' region signature appears at 232–236 (KMSKR). K235 contacts ATP.

It belongs to the class-I aminoacyl-tRNA synthetase family. Glutamate--tRNA ligase type 1 subfamily. As to quaternary structure, monomer.

It localises to the cytoplasm. It carries out the reaction tRNA(Glu) + L-glutamate + ATP = L-glutamyl-tRNA(Gln) + AMP + diphosphate. Functionally, aminoacylates tRNA(Gln) with glutamate. Does not aminoacylate tRNA(Glu). This Helicobacter pylori (strain ATCC 700392 / 26695) (Campylobacter pylori) protein is GlutamylGlutaminyl-tRNA synthetase (gltX2).